A 71-amino-acid polypeptide reads, in one-letter code: DNA-directed RNA polymerase subunit omega (71 aa).

It belongs to the RNA polymerase subunit omega family. The RNAP catalytic core consists of 2 alpha, 1 beta, 1 beta' and 1 omega subunit. When a sigma factor is associated with the core the holoenzyme is formed, which can initiate transcription.

It carries out the reaction RNA(n) + a ribonucleoside 5'-triphosphate = RNA(n+1) + diphosphate. Functionally, promotes RNA polymerase assembly. Latches the N- and C-terminal regions of the beta' subunit thereby facilitating its interaction with the beta and alpha subunits. The sequence is that of DNA-directed RNA polymerase subunit omega from Levilactobacillus brevis (strain ATCC 367 / BCRC 12310 / CIP 105137 / JCM 1170 / LMG 11437 / NCIMB 947 / NCTC 947) (Lactobacillus brevis).